A 77-amino-acid chain; its full sequence is U8-lycotoxin-Ls1n (77 aa).

Residues 1–20 (MKLMIFTGLVLFAIVSLIEA) form the signal peptide. The propeptide occupies 21–26 (QAENEK).

This sequence belongs to the neurotoxin 19 (CSTX) family. 08 (U8-Lctx) subfamily. Post-translationally, contains 4 disulfide bonds. In terms of tissue distribution, expressed by the venom gland.

The protein resides in the secreted. This chain is U8-lycotoxin-Ls1n, found in Lycosa singoriensis (Wolf spider).